A 204-amino-acid chain; its full sequence is UPF0637 protein lwe1043 (204 aa).

Belongs to the UPF0637 family.

The protein is UPF0637 protein lwe1043 of Listeria welshimeri serovar 6b (strain ATCC 35897 / DSM 20650 / CCUG 15529 / CIP 8149 / NCTC 11857 / SLCC 5334 / V8).